The following is a 322-amino-acid chain: Lipoyl synthase (322 aa).

Residues 1-14 are compositionally biased toward polar residues; it reads MKTLDENQAPSRQT. Positions 1-30 are disordered; the sequence is MKTLDENQAPSRQTPESHRRGAEKLSRIPV. Positions 15–26 are enriched in basic and acidic residues; it reads PESHRRGAEKLS. The [4Fe-4S] cluster site is built by Cys70, Cys75, Cys81, Cys96, Cys100, Cys103, and Ser310. The Radical SAM core domain maps to 82 to 299; sequence FGHGTATFMI…AGYARELGFA (218 aa).

It belongs to the radical SAM superfamily. Lipoyl synthase family. Requires [4Fe-4S] cluster as cofactor.

The protein localises to the cytoplasm. The catalysed reaction is [[Fe-S] cluster scaffold protein carrying a second [4Fe-4S](2+) cluster] + N(6)-octanoyl-L-lysyl-[protein] + 2 oxidized [2Fe-2S]-[ferredoxin] + 2 S-adenosyl-L-methionine + 4 H(+) = [[Fe-S] cluster scaffold protein] + N(6)-[(R)-dihydrolipoyl]-L-lysyl-[protein] + 4 Fe(3+) + 2 hydrogen sulfide + 2 5'-deoxyadenosine + 2 L-methionine + 2 reduced [2Fe-2S]-[ferredoxin]. It functions in the pathway protein modification; protein lipoylation via endogenous pathway; protein N(6)-(lipoyl)lysine from octanoyl-[acyl-carrier-protein]: step 2/2. In terms of biological role, catalyzes the radical-mediated insertion of two sulfur atoms into the C-6 and C-8 positions of the octanoyl moiety bound to the lipoyl domains of lipoate-dependent enzymes, thereby converting the octanoylated domains into lipoylated derivatives. This is Lipoyl synthase from Methylococcus capsulatus (strain ATCC 33009 / NCIMB 11132 / Bath).